The sequence spans 339 residues: Adenylosuccinate synthetase (339 aa).

GTP-binding positions include 12-18 (GDEGKGS) and 42-44 (GHS). Catalysis depends on Asp-13, which acts as the Proton acceptor. Mg(2+) contacts are provided by Asp-13 and Gly-42. Residues 13–16 (DEGK), 40–43 (NAGH), Thr-127, Arg-141, Gln-179, Thr-194, and Arg-256 contribute to the IMP site. His-43 (proton donor) is an active-site residue. 252–258 (TVTGRRR) serves as a coordination point for substrate. GTP-binding positions include Arg-258, 284–286 (MLD), and 324–326 (KTG).

It belongs to the adenylosuccinate synthetase family. As to quaternary structure, homodimer. The cofactor is Mg(2+).

It localises to the cytoplasm. It catalyses the reaction IMP + L-aspartate + GTP = N(6)-(1,2-dicarboxyethyl)-AMP + GDP + phosphate + 2 H(+). It functions in the pathway purine metabolism; AMP biosynthesis via de novo pathway; AMP from IMP: step 1/2. In terms of biological role, plays an important role in the de novo pathway of purine nucleotide biosynthesis. Catalyzes the first committed step in the biosynthesis of AMP from IMP. The chain is Adenylosuccinate synthetase from Pyrococcus horikoshii (strain ATCC 700860 / DSM 12428 / JCM 9974 / NBRC 100139 / OT-3).